The chain runs to 396 residues: Putative protein IntB (396 aa).

The Core-binding (CB) domain maps to 71–151; that stretch reads RTFKEVAIEW…RTTAIMRYAV (81 aa). One can recognise a Tyr recombinase domain in the interval 174–367; it reads QHRPALELKR…EHLEERRLML (194 aa). Active-site residues include arginine 213, lysine 252, histidine 316, arginine 319, and histidine 343. Residue tyrosine 353 is the O-(3'-phospho-DNA)-tyrosine intermediate of the active site.

Belongs to the 'phage' integrase family.

The protein is Putative protein IntB (intB) of Escherichia coli (strain K12).